The following is a 130-amino-acid chain: Sirohydrochlorin cobaltochelatase (130 aa).

The active-site Proton acceptor is H12. Co(2+) is bound at residue H12. H12 is a binding site for Ni(2+). Substrate contacts are provided by residues E48 and 73-78 (LASGVH). Co(2+) is bound at residue H78. H78 serves as a coordination point for Ni(2+).

This sequence belongs to the CbiX family. CbiXS subfamily. As to quaternary structure, homotetramer; dimer of dimers.

It catalyses the reaction Co-sirohydrochlorin + 2 H(+) = sirohydrochlorin + Co(2+). The catalysed reaction is Ni-sirohydrochlorin + 2 H(+) = sirohydrochlorin + Ni(2+). Its pathway is cofactor biosynthesis; adenosylcobalamin biosynthesis; cob(II)yrinate a,c-diamide from sirohydrochlorin (anaerobic route): step 1/10. Functionally, catalyzes the insertion of Co(2+) into sirohydrochlorin as part of the anaerobic pathway to cobalamin biosynthesis. Involved in the biosynthesis of the unique nickel-containing tetrapyrrole coenzyme F430, the prosthetic group of methyl-coenzyme M reductase (MCR), which plays a key role in methanogenesis and anaerobic methane oxidation. Catalyzes the insertion of Ni(2+) into sirohydrochlorin to yield Ni-sirohydrochlorin. This Methanosarcina barkeri (strain Fusaro / DSM 804) protein is Sirohydrochlorin cobaltochelatase.